Reading from the N-terminus, the 450-residue chain is UDP-N-acetylmuramoylalanine--D-glutamate ligase (450 aa).

116 to 122 (GSNGKTT) is an ATP binding site.

This sequence belongs to the MurCDEF family.

It localises to the cytoplasm. The catalysed reaction is UDP-N-acetyl-alpha-D-muramoyl-L-alanine + D-glutamate + ATP = UDP-N-acetyl-alpha-D-muramoyl-L-alanyl-D-glutamate + ADP + phosphate + H(+). Its pathway is cell wall biogenesis; peptidoglycan biosynthesis. Its function is as follows. Cell wall formation. Catalyzes the addition of glutamate to the nucleotide precursor UDP-N-acetylmuramoyl-L-alanine (UMA). In Dechloromonas aromatica (strain RCB), this protein is UDP-N-acetylmuramoylalanine--D-glutamate ligase.